A 606-amino-acid polypeptide reads, in one-letter code: Scavenger receptor class A member 3 (606 aa).

Residues 1–56 (MKVRSAGSDRDVLCVTEEDLAGEDEDMPSFPCTQEGRAGPRCNRCQKNLSLHTSVR) are Cytoplasmic-facing. Residues 57-77 (ILYLFLTLLLVAVAVLASLVF) form a helical; Signal-anchor for type II membrane protein membrane-spanning segment. At 78–606 (RKVDSLSEDI…PGPPGNQSPY (529 aa)) the chain is on the extracellular side. 10 N-linked (GlcNAc...) asparagine glycosylation sites follow: Asn115, Asn182, Asn224, Asn257, Asn313, Asn337, Asn365, Asn400, Asn430, and Asn451. Residues 455–606 (IRGVPGPPGP…PGPPGNQSPY (152 aa)) form a disordered region. Collagen-like domains follow at residues 456–558 (RGVP…PGPS) and 559–601 (GPQG…GPPG). The segment covering 497 to 516 (PQGQPGEPGPVGERGPAGPR) has biased composition (low complexity). A compositionally biased stretch (gly residues) spans 526 to 535 (GSFGTGGPRG). 2 stretches are compositionally biased toward pro residues: residues 548–558 (PEGPPGSPGPS) and 591–606 (PGLPGPPGPPGNQSPY).

The protein resides in the endoplasmic reticulum membrane. The protein localises to the golgi apparatus membrane. Its function is as follows. Seems to protect cells by scavenging oxidative molecules or harmful products of oxidation. This chain is Scavenger receptor class A member 3 (Scara3), found in Mus musculus (Mouse).